The chain runs to 161 residues: C-type natriuretic peptide (161 aa).

The first 22 residues, 1-22, serve as a signal peptide directing secretion; it reads MFASRLAALGLLLLALVLDGKP. The segment at 19-135 is disordered; sequence DGKPAPPPQP…GGGGSRRLKG (117 aa). The propeptide occupies 23–139; it reads APPPQPLRKA…SRRLKGLPKK (117 aa). Low complexity-rich tracts occupy residues 29–60 and 76–93; these read LRKAPAGGTTALQRQLTEQQQQQQQAEGSSGP and AAPTAPKSKGAAASAASR. The segment covering 94-104 has biased composition (basic and acidic residues); sequence LLRDLRPDGKQ. Over residues 120–130 the composition is skewed to gly residues; that stretch reads GGGGGGGGGGS. A disulfide bridge links C145 with C161.

Belongs to the natriuretic peptide family. As to expression, expressed by the venom gland.

It is found in the secreted. Functionally, snake venom natriuretic peptide that has a vasorelaxant activity in rat aortic strips and a diuretic potency in anesthetized rats. May act by activating natriuretic receptors (NPR1 and/or NPR2). This chain is C-type natriuretic peptide, found in Rhabdophis tigrinus tigrinus (Tiger keelback snake).